The sequence spans 388 residues: 2-methylene-furan-3-one reductase (388 aa).

A chloroplast-targeting transit peptide spans 1-60 (MEALLSSTTLQLKPLHPPSSFSSLHSPFSSISVLRVKGSKKAETFIQRSNFSTVLPLRVS). Residues lysine 125, 240-241 (GV), 263-266 (STGK), tyrosine 281, 330-332 (FVV), and 377-378 (RA) each bind NADP(+). Lysine 125 provides a ligand contact to substrate.

The protein belongs to the zinc-containing alcohol dehydrogenase family. Quinone oxidoreductase subfamily. In terms of assembly, monomer.

Its subcellular location is the plastid. The protein localises to the chloroplast. It catalyses the reaction 4-hydroxy-2,5-dimethyl-furan-3(2H)-one + NADP(+) = 4-hydroxy-5-methyl-2-methylenefuran-3(2H)-one + NADPH + H(+). Enone oxidoreductase involved in the biosynthesis of 4-hydroxy-2,5-dimethyl-3(2H)-furanone (HDMF or furaneol). Can use both NADH and NADPH as the electron donor. The polypeptide is 2-methylene-furan-3-one reductase (EO) (Solanum lycopersicum (Tomato)).